The following is a 1738-amino-acid chain: Interaptin (1738 aa).

Positions Met1–Tyr248 are actin-binding. Residues Met1–Pro1705 are Cytoplasmic-facing. Calponin-homology (CH) domains lie at Ile22–Gln128 and Thr146–Gln249. 3 disordered regions span residues Ser285 to Ser350, Ile1068 to Asp1090, and Leu1589 to Ile1627. The span at Gln292–Asn301 shows a compositional bias: low complexity. A compositionally biased stretch (polar residues) spans Leu302 to Lys316. 3 stretches are compositionally biased toward low complexity: residues Ser317–Thr344, Ile1068–Leu1086, and Leu1589–Pro1617. Residues Glu373 to Gln1598 adopt a coiled-coil conformation. Residues Ile1706–Phe1726 form a helical; Anchor for type IV membrane protein membrane-spanning segment.

The protein belongs to the alpha-actinin family.

It localises to the nucleus membrane. The protein resides in the endoplasmic reticulum membrane. Its subcellular location is the golgi apparatus. It is found in the golgi stack membrane. The protein localises to the cytoplasm. It localises to the cytoskeleton. The protein resides in the microtubule organizing center. Its subcellular location is the centrosome. May function as linker between cellular membranes and the actin cytoskeleton. Required for normal development of fruiting bodies. This Dictyostelium discoideum (Social amoeba) protein is Interaptin (abpD).